The following is a 631-amino-acid chain: Glutamyl-tRNA(Gln) amidotransferase subunit E (631 aa).

The protein belongs to the GatB/GatE family. GatE subfamily. In terms of assembly, heterodimer of GatD and GatE.

It carries out the reaction L-glutamyl-tRNA(Gln) + L-glutamine + ATP + H2O = L-glutaminyl-tRNA(Gln) + L-glutamate + ADP + phosphate + H(+). Allows the formation of correctly charged Gln-tRNA(Gln) through the transamidation of misacylated Glu-tRNA(Gln) in organisms which lack glutaminyl-tRNA synthetase. The reaction takes place in the presence of glutamine and ATP through an activated gamma-phospho-Glu-tRNA(Gln). The GatDE system is specific for glutamate and does not act on aspartate. This Methanococcus maripaludis (strain DSM 14266 / JCM 13030 / NBRC 101832 / S2 / LL) protein is Glutamyl-tRNA(Gln) amidotransferase subunit E.